Consider the following 230-residue polypeptide: ATP synthase subunit a (230 aa).

A run of 5 helical transmembrane segments spans residues 17–37, 78–98, 107–127, 165–187, and 198–218; these read LPIT…FIMA, IFPF…IGVI, DLSV…WFGI, LFGN…GFLV, and EAII…AGGI.

Belongs to the ATPase A chain family. As to quaternary structure, F-type ATPases have 2 components, CF(1) - the catalytic core - and CF(0) - the membrane proton channel. CF(1) has five subunits: alpha(3), beta(3), gamma(1), delta(1), epsilon(1). CF(0) has three main subunits: a(1), b(2) and c(9-12). The alpha and beta chains form an alternating ring which encloses part of the gamma chain. CF(1) is attached to CF(0) by a central stalk formed by the gamma and epsilon chains, while a peripheral stalk is formed by the delta and b chains.

It is found in the cell inner membrane. Its function is as follows. Key component of the proton channel; it plays a direct role in the translocation of protons across the membrane. The polypeptide is ATP synthase subunit a (Legionella pneumophila (strain Paris)).